The primary structure comprises 180 residues: Large ribosomal subunit protein uL15 (180 aa).

Residues 1 to 62 (MKKERLEQAA…KTAGRGSKGQ (62 aa)) are disordered. A compositionally biased stretch (basic residues) spans 35-44 (GAKKEKKRVG).

This sequence belongs to the universal ribosomal protein uL15 family. Part of the 50S ribosomal subunit.

Functionally, binds to the 23S rRNA. This chain is Large ribosomal subunit protein uL15, found in Leptospira borgpetersenii serovar Hardjo-bovis (strain JB197).